The following is a 217-amino-acid chain: Probable transaldolase (217 aa).

Catalysis depends on Lys-83, which acts as the Schiff-base intermediate with substrate.

Belongs to the transaldolase family. Type 3B subfamily.

It localises to the cytoplasm. It carries out the reaction D-sedoheptulose 7-phosphate + D-glyceraldehyde 3-phosphate = D-erythrose 4-phosphate + beta-D-fructose 6-phosphate. Its pathway is carbohydrate degradation; pentose phosphate pathway; D-glyceraldehyde 3-phosphate and beta-D-fructose 6-phosphate from D-ribose 5-phosphate and D-xylulose 5-phosphate (non-oxidative stage): step 2/3. Functionally, transaldolase is important for the balance of metabolites in the pentose-phosphate pathway. This chain is Probable transaldolase, found in Brucella abortus (strain S19).